A 264-amino-acid polypeptide reads, in one-letter code: Thymidylate synthase (264 aa).

A dUMP-binding site is contributed by arginine 21. Histidine 51 is a (6R)-5,10-methylene-5,6,7,8-tetrahydrofolate binding site. The active-site Nucleophile is cysteine 146. Residues arginine 166–aspartate 169, asparagine 177, and histidine 207–tyrosine 209 each bind dUMP. Residue aspartate 169 participates in (6R)-5,10-methylene-5,6,7,8-tetrahydrofolate binding. Alanine 263 is a (6R)-5,10-methylene-5,6,7,8-tetrahydrofolate binding site.

Belongs to the thymidylate synthase family. Bacterial-type ThyA subfamily. As to quaternary structure, homodimer.

It is found in the cytoplasm. The enzyme catalyses dUMP + (6R)-5,10-methylene-5,6,7,8-tetrahydrofolate = 7,8-dihydrofolate + dTMP. Its pathway is pyrimidine metabolism; dTTP biosynthesis. In terms of biological role, catalyzes the reductive methylation of 2'-deoxyuridine-5'-monophosphate (dUMP) to 2'-deoxythymidine-5'-monophosphate (dTMP) while utilizing 5,10-methylenetetrahydrofolate (mTHF) as the methyl donor and reductant in the reaction, yielding dihydrofolate (DHF) as a by-product. This enzymatic reaction provides an intracellular de novo source of dTMP, an essential precursor for DNA biosynthesis. In Brucella canis (strain ATCC 23365 / NCTC 10854 / RM-666), this protein is Thymidylate synthase.